The primary structure comprises 305 residues: Transcription factor MYB87 (305 aa).

HTH myb-type domains follow at residues 9–66 (KMAV…RPNL) and 67–117 (KHGG…KKKL). 2 DNA-binding regions (H-T-H motif) span residues 38–62 (WISLPQRIGIKRCGKSCRLRWLNYL) and 90–113 (WSIIASQLPGRTDNDIKNYWNTRL).

As to expression, expressed in roots, leaves, internodes, shoot tips and flowers.

The protein resides in the nucleus. Its function is as follows. Transcription factor that functions as a regulator of genes affecting cell wall organization and remodeling. Activates genes related to the primary cell wall and represses genes related to the secondary cell wall and expansins. Required for the regulation of longitudinal cell growth in stems, leaves, petioles, roots, flowers and siliques. The chain is Transcription factor MYB87 from Arabidopsis thaliana (Mouse-ear cress).